Here is a 250-residue protein sequence, read N- to C-terminus: Probable phosphatase VPA1527 (250 aa).

Zn(2+)-binding residues include His-8, His-10, His-16, His-41, Glu-74, His-102, His-132, Asp-194, and His-196.

It belongs to the PHP family. The cofactor is Zn(2+).

In Vibrio parahaemolyticus serotype O3:K6 (strain RIMD 2210633), this protein is Probable phosphatase VPA1527.